Here is a 578-residue protein sequence, read N- to C-terminus: MKEIAMRNSKRKPEPTPFAGKKLRSTRLRRKRAQISPVLVQSPLWSKQIGVSAASVDSCSDLLADDNVSCGSSRVEKSSNPKKTLIEEVEVSKPGYNVKETIGDSKFRRITRSYSKLHKEKEGDEIEVSESSCVDSNSGAGLRRLNVKGNKINDNDEISFSRSDVTFAGHVSNSRSLNFESENKESDVVSVISGVEYCSKFGSVTGGADNEEIEISKPSSFVEADSSLGSAKELKPELEIVGCVSDLACSEKFSEEVSDSLDDESSEQRSEIYSQYSDFDYSDYTPSIFFDSGSEFSEKSSSDSPISHSRSLYLQFKEQFCRSTIPNDFGSSCEEEIHSELLRFDDEEVEESYLRLRERERSHAYMRDCAKAYCSRMDNTGLIPRLRSIMVQWIVKQCSDMGLQQETLFLGVGLLDRFLSKGSFKSERTLILVGIASLTLATRIEENQPYNSIRKRNFTIQNLRYSRHEVVAMEWLVQEVLNFKCFTPTIFNFLWFYLKAARANPEVERKAKSLAVTSLSDQTQLCFWPSTVAAALVVLACIEHNKISAYQRVIKVHVRTTDNELPECVKSLDWLLGQ.

The interval 1–31 (MKEIAMRNSKRKPEPTPFAGKKLRSTRLRRK) is disordered. Residues 21-31 (KKLRSTRLRRK) are compositionally biased toward basic residues.

The protein belongs to the cyclin family. As to quaternary structure, may interact with CDKA-1 and CDKB1-1.

Meiosis-specific cyclin. Required for normal homolog synapsis and recombination in early to mid-prophase 1. May regulate the timing of sister chromatid separation. This is Cyclin-SDS (SDS) from Arabidopsis thaliana (Mouse-ear cress).